Reading from the N-terminus, the 245-residue chain is 1-(5-phosphoribosyl)-5-[(5-phosphoribosylamino)methylideneamino] imidazole-4-carboxamide isomerase (245 aa).

The active-site Proton acceptor is the aspartate 7. Aspartate 129 acts as the Proton donor in catalysis.

It belongs to the HisA/HisF family.

The protein localises to the cytoplasm. The catalysed reaction is 1-(5-phospho-beta-D-ribosyl)-5-[(5-phospho-beta-D-ribosylamino)methylideneamino]imidazole-4-carboxamide = 5-[(5-phospho-1-deoxy-D-ribulos-1-ylimino)methylamino]-1-(5-phospho-beta-D-ribosyl)imidazole-4-carboxamide. It participates in amino-acid biosynthesis; L-histidine biosynthesis; L-histidine from 5-phospho-alpha-D-ribose 1-diphosphate: step 4/9. The protein is 1-(5-phosphoribosyl)-5-[(5-phosphoribosylamino)methylideneamino] imidazole-4-carboxamide isomerase of Shewanella sp. (strain W3-18-1).